A 434-amino-acid polypeptide reads, in one-letter code: Probable phosphoglucosamine mutase (434 aa).

Residue S91 is the Phosphoserine intermediate of the active site. Positions 91, 229, 231, and 233 each coordinate Mg(2+). Residue S91 is modified to Phosphoserine.

The protein belongs to the phosphohexose mutase family. The cofactor is Mg(2+). Activated by phosphorylation.

It carries out the reaction alpha-D-glucosamine 1-phosphate = D-glucosamine 6-phosphate. Its function is as follows. Catalyzes the conversion of glucosamine-6-phosphate to glucosamine-1-phosphate. The polypeptide is Probable phosphoglucosamine mutase (Methanosarcina barkeri (strain Fusaro / DSM 804)).